Reading from the N-terminus, the 172-residue chain is MSSKFGNQCGKTQKIYIRNELINPDIEFSVPNSIFSCIGPKYAYASLQSIVVKYTPVITERSTGSIGISVSDRRFSASEVVSNISLDTSSKANLMISGFSCCPLEEGCPYTITISTKLEGVNYGAAVGSLVVSPSFRLSNEPIPTTGITYQMIKLGDVQKTYQGVAITDEKK.

This chain is Protein 3 (3), found in Northern cereal mosaic virus (NCMV).